We begin with the raw amino-acid sequence, 452 residues long: Elongation factor Tu, mitochondrial (452 aa).

The N-terminal 43 residues, Met-1 to Leu-43, are a transit peptide targeting the mitochondrion. The 197-residue stretch at Lys-55–Thr-251 folds into the tr-type G domain. Residues Gly-64–Thr-71 form a G1 region. Positions 67, 69, 70, 71, and 72 each coordinate GTP. Thr-71 is a binding site for Mg(2+). Position 79 is an N6-acetyllysine (Lys-79). Lys-88 is modified (N6-acetyllysine; alternate). Lys-88 is modified (N6-succinyllysine; alternate). The tract at residues Gly-105 to Asn-109 is G2. A G3 region spans residues Asp-126–Gly-129. Residues Asn-181, Asp-184, Ser-219, Ala-220, and Leu-221 each contribute to the GTP site. The segment at Asn-181–Asp-184 is G4. A G5 region spans residues Ser-219–Leu-221. Lys-234 bears the N6-succinyllysine mark. At Lys-256 the chain carries N6-acetyllysine. Phosphothreonine is present on Thr-278. The residue at position 286 (Lys-286) is an N6-succinyllysine. Residue Ser-312 is modified to Phosphoserine. N6-acetyllysine is present on residues Lys-361 and Lys-418.

This sequence belongs to the TRAFAC class translation factor GTPase superfamily. Classic translation factor GTPase family. EF-Tu/EF-1A subfamily. In terms of assembly, interacts with NLRX1. Interacts with ATG16L1.

It is found in the mitochondrion. The catalysed reaction is GTP + H2O = GDP + phosphate + H(+). In terms of biological role, GTP hydrolase that promotes the GTP-dependent binding of aminoacyl-tRNA to the A-site of ribosomes during protein biosynthesis. Also plays a role in the regulation of autophagy and innate immunity. Recruits ATG5-ATG12 and NLRX1 at mitochondria and serves as a checkpoint of the RIGI-MAVS pathway. In turn, inhibits RLR-mediated type I interferon while promoting autophagy. This Bos taurus (Bovine) protein is Elongation factor Tu, mitochondrial (TUFM).